The primary structure comprises 842 residues: Cullin-8 (842 aa).

Residues 1–50 (MINESVSKREGFHESISRETSASNALGLYNKFNDERNPRYRTMIAELHEF) form a required for interaction with MMS1 region. Over residues 755–765 (LQSSNTGGERT) the composition is skewed to polar residues. Residues 755–775 (LQSSNTGGERTSSAHHEGSNS) form a disordered region. A Glycyl lysine isopeptide (Lys-Gly) (interchain with G-Cter in NEDD8) cross-link involves residue K791.

It belongs to the cullin family. Component of multiple cullin-RING ligases (CRLs) composed of 4 subunits: the RING protein HRT1, the cullin RTT101, a linker protein MMS1, and one of many alternative substrate receptors belonging to a protein family described as DCAF (DDB1- and CUL4-associated factor). Component of a RTT101(MMS1-MMS22) complex with the substrate receptor MMS22. This complex further interacts with RTT107 and CTF4 to form RTT101-MMS1-MMS22-RTT107 and RTT101-MMS1-MMS22-CTF4 complexes respectively. Component of a RTT101(MSS1-CRT10) complex with the substrate receptor CRT10. Component of a RTT101(MSS1-ESC2) complex with the potential substrate receptor ESC2. Component of a RTT101(MSS1-ORC5) complex with the potential substrate receptor ORC5. Interacts (via C-ter) with HRT1; required for ubiquitin-ligase activity. Interacts (via N-ter) with MMS1. Neddylated. HRT1-binding is necessary for RUB1/NEDD8 modification of RTT101. The modification enhances ubiquitin-ligase activity.

Its subcellular location is the cytoplasm. The protein localises to the nucleus. Its pathway is protein modification; protein ubiquitination. Core component of multiple cullin-RING-based E3 ubiquitin-protein ligase complexes (CRLs), which mediate the ubiquitination of target proteins. As a scaffold protein may contribute to catalysis through positioning of the substrate and the ubiquitin-conjugating enzyme. The CRL associates with CDC34 as the E2 ubiquitin-conjugating enzyme. The functional specificity of the CRL depends on the type of the associated substrate receptor protein. RTT101(MMS1-MMS22) promotes fork progression through damaged DNA or natural pause sites by stabilizing replication proteins like the replication fork-pausing complex (FPC) and leading-strand polymerase at stalled replication forks. RTT101(MMS1-MMS22) ubiquitinates the acetylated histones H3K56ac-H4 at lysine residues H3K121, H3K122 and H3K125. Ubiquitination is required for efficient histone deposition during replication-coupled nucleosome assembly, probably by facilitating the transfer of H3-H4 from ASF1 to other chaperones involved in histone deposition. RTT101(MMS1-CRT10) may regulate nucleotide synthesis through transcriptional regulation of ribonucleotide reductase. RTT101(MMS1) is also involved in the non-functional rRNA decay (NRD) of 25S rRNA through the selective, ubiquitination-dependent degradation of nonfunctional ribosomal particles. Ubiquitinates the FACT (facilitates chromatin transcription) complex subunit SPT16 in an MMS1-independent manner. Involved in regulation of Ty1 transposition and protects the genome from Ty1 integration upstream of tRNA genes. In Saccharomyces cerevisiae (strain ATCC 204508 / S288c) (Baker's yeast), this protein is Cullin-8 (RTT101).